Consider the following 51-residue polypeptide: ATP synthase protein 8 (51 aa).

The chain crosses the membrane as a helical span at residues leucine 7 to leucine 27.

It belongs to the ATPase protein 8 family. F-type ATPases have 2 components, CF(1) - the catalytic core - and CF(0) - the membrane proton channel.

Its subcellular location is the mitochondrion membrane. Mitochondrial membrane ATP synthase (F(1)F(0) ATP synthase or Complex V) produces ATP from ADP in the presence of a proton gradient across the membrane which is generated by electron transport complexes of the respiratory chain. F-type ATPases consist of two structural domains, F(1) - containing the extramembraneous catalytic core and F(0) - containing the membrane proton channel, linked together by a central stalk and a peripheral stalk. During catalysis, ATP synthesis in the catalytic domain of F(1) is coupled via a rotary mechanism of the central stalk subunits to proton translocation. Part of the complex F(0) domain. Minor subunit located with subunit a in the membrane. The sequence is that of ATP synthase protein 8 (MT-ATP8) from Limulus polyphemus (Atlantic horseshoe crab).